Here is a 47-residue protein sequence, read N- to C-terminus: MFKRKSTAELAAQMAKLNGNKGFSSEDKGEWKLKLDNAGNGQAVIRF.

In terms of assembly, homodimer in the absence of DNA, monomer when binding DNA.

Binds preferentially to single-stranded DNA and therefore, destabilizes double-stranded DNA. It is involved in DNA replication, repair and recombination. Binds ss-DNA as the replication fork advances and stimulates the replisome processivity and accuracy. This Escherichia coli (Bacteriophage RB6) protein is Single-stranded DNA-binding protein (32).